Reading from the N-terminus, the 116-residue chain is Cysteine-rich venom protein Cau1 (116 aa).

The 39-residue stretch at 4 to 42 (SYAVVGHYTQIVWYKSDRIGCAAAYCPSSVYNYFYVCQY) folds into the SCP domain. 5 disulfide bridges follow: Cys-24–Cys-40, Cys-62–Cys-69, Cys-65–Cys-74, Cys-87–Cys-105, and Cys-96–Cys-109. A ShKT domain is found at 78–111 (CRVEDEFINCKDMAESRDCQDNYMMTNCAAFCSC).

The protein belongs to the CRISP family. As to expression, expressed by the venom gland.

The protein resides in the secreted. Functionally, blocks contraction of smooth muscle elicited by high potassium-induced depolarization, but does not block caffeine-stimulated contraction. May target voltage-gated calcium channels on smooth muscle. This Causus rhombeatus (Rhombic night adder) protein is Cysteine-rich venom protein Cau1.